The primary structure comprises 1089 residues: WD repeat-containing protein on Y chromosome (1089 aa).

WD repeat units lie at residues 155–199 (EEVA…IRTA), 207–249 (PHAV…RGPF), 329–368 (RIPL…EPSA), 372–411 (GHNG…LLQT), 462–501 (THAA…RKII), 514–553 (TIDI…VIRN), and 601–641 (FHTD…RRYS). The disordered stretch occupies residues 661–684 (KRSKRWASRAPHSGSHMMSHTGSH). Low complexity predominate over residues 672–684 (HSGSHMMSHTGSH). WD repeat units follow at residues 767 to 806 (KTGD…IPEA) and 850 to 889 (GHLK…LGTL). The disordered stretch occupies residues 1049-1089 (LNIKLPSRRRSDRTNDPRNMRTAKTRGDMGLGHRSSHTSQN).

This is WD repeat-containing protein on Y chromosome from Drosophila willistoni (Fruit fly).